Consider the following 403-residue polypeptide: Cysteine desulfurase IscS (403 aa).

Residues 75–76, Asn155, Gln183, and 203–205 each bind pyridoxal 5'-phosphate; these read AT and SAH. The residue at position 206 (Lys206) is an N6-(pyridoxal phosphate)lysine. Thr243 is a binding site for pyridoxal 5'-phosphate. The active-site Cysteine persulfide intermediate is Cys328. Cys328 is a [2Fe-2S] cluster binding site.

This sequence belongs to the class-V pyridoxal-phosphate-dependent aminotransferase family. NifS/IscS subfamily. As to quaternary structure, homodimer. Forms a heterotetramer with IscU, interacts with other sulfur acceptors. Pyridoxal 5'-phosphate serves as cofactor.

It localises to the cytoplasm. The catalysed reaction is (sulfur carrier)-H + L-cysteine = (sulfur carrier)-SH + L-alanine. The protein operates within cofactor biosynthesis; iron-sulfur cluster biosynthesis. Its function is as follows. Master enzyme that delivers sulfur to a number of partners involved in Fe-S cluster assembly, tRNA modification or cofactor biosynthesis. Catalyzes the removal of elemental sulfur atoms from cysteine to produce alanine. Functions as a sulfur delivery protein for Fe-S cluster synthesis onto IscU, an Fe-S scaffold assembly protein, as well as other S acceptor proteins. The sequence is that of Cysteine desulfurase IscS from Psychromonas ingrahamii (strain DSM 17664 / CCUG 51855 / 37).